Consider the following 153-residue polypeptide: Movement protein (153 aa).

Disordered regions lie at residues 1–24 (MAQE…EQDP) and 107–153 (ALSL…RNQR). Composition is skewed to polar residues over residues 109 to 122 (SLLS…NQPW) and 140 to 153 (GQRQ…RNQR).

The protein belongs to the luteoviruses movement protein family.

The protein resides in the host nucleus envelope. Transports viral genome to neighboring plant cells directly through plasmosdesmata, without any budding. The movement protein allows efficient cell to cell propagation, by bypassing the host cell wall barrier. Acts as a suppressor of RNA-mediated gene silencing, also known as post-transcriptional gene silencing (PTGS), a mechanism of plant viral defense that limits the accumulation of viral RNAs. This chain is Movement protein, found in Avena byzantina (Oat).